We begin with the raw amino-acid sequence, 315 residues long: DNA-directed RNA polymerase subunit alpha (315 aa).

The alpha N-terminal domain (alpha-NTD) stretch occupies residues 1 to 228 (MLEIEKPVIQ…EHFKLFMTLT (228 aa)). The tract at residues 245–315 (KEKALEMTIE…LGLNLRLNDE (71 aa)) is alpha C-terminal domain (alpha-CTD).

The protein belongs to the RNA polymerase alpha chain family. In terms of assembly, homodimer. The RNAP catalytic core consists of 2 alpha, 1 beta, 1 beta' and 1 omega subunit. When a sigma factor is associated with the core the holoenzyme is formed, which can initiate transcription.

The catalysed reaction is RNA(n) + a ribonucleoside 5'-triphosphate = RNA(n+1) + diphosphate. DNA-dependent RNA polymerase catalyzes the transcription of DNA into RNA using the four ribonucleoside triphosphates as substrates. The sequence is that of DNA-directed RNA polymerase subunit alpha from Clostridium perfringens (strain ATCC 13124 / DSM 756 / JCM 1290 / NCIMB 6125 / NCTC 8237 / Type A).